We begin with the raw amino-acid sequence, 557 residues long: Dihydroxy-acid dehydratase (557 aa).

Mg(2+) is bound at residue D78. C119 contributes to the [2Fe-2S] cluster binding site. Residues D120 and K121 each contribute to the Mg(2+) site. K121 carries the N6-carboxylysine modification. C192 contacts [2Fe-2S] cluster. E442 provides a ligand contact to Mg(2+). The Proton acceptor role is filled by S468.

Belongs to the IlvD/Edd family. Homodimer. [2Fe-2S] cluster is required as a cofactor. It depends on Mg(2+) as a cofactor.

It carries out the reaction (2R)-2,3-dihydroxy-3-methylbutanoate = 3-methyl-2-oxobutanoate + H2O. It catalyses the reaction (2R,3R)-2,3-dihydroxy-3-methylpentanoate = (S)-3-methyl-2-oxopentanoate + H2O. It functions in the pathway amino-acid biosynthesis; L-isoleucine biosynthesis; L-isoleucine from 2-oxobutanoate: step 3/4. Its pathway is amino-acid biosynthesis; L-valine biosynthesis; L-valine from pyruvate: step 3/4. Functions in the biosynthesis of branched-chain amino acids. Catalyzes the dehydration of (2R,3R)-2,3-dihydroxy-3-methylpentanoate (2,3-dihydroxy-3-methylvalerate) into 2-oxo-3-methylpentanoate (2-oxo-3-methylvalerate) and of (2R)-2,3-dihydroxy-3-methylbutanoate (2,3-dihydroxyisovalerate) into 2-oxo-3-methylbutanoate (2-oxoisovalerate), the penultimate precursor to L-isoleucine and L-valine, respectively. The polypeptide is Dihydroxy-acid dehydratase (Bacillus anthracis (strain A0248)).